An 83-amino-acid chain; its full sequence is Mu-theraphotoxin-Hhn2b 3 (83 aa).

Residues 1 to 21 form the signal peptide; the sequence is MKASMFLALAGLVLLFVVCYA. A propeptide spanning residues 22-48 is cleaved from the precursor; sequence SESEEKEFPRELISKIFAVDDFKGEVR. Cystine bridges form between C50-C65, C57-C70, and C64-C77. L81 carries the post-translational modification Leucine amide.

It belongs to the neurotoxin 10 (Hwtx-1) family. 14 (Hntx-1) subfamily. Monomer. In terms of tissue distribution, expressed by the venom gland.

The protein localises to the secreted. Its function is as follows. Weakly blocks the rat SCN2A/SCN1B (Nav1.2/beta-1) sodium channel (IC(50)=68 uM) and the insect sodium channel para/tipE (IC(50)=4.3 uM), without altering the activation or inactivation kinetics (depressant toxin). The chain is Mu-theraphotoxin-Hhn2b 3 from Cyriopagopus hainanus (Chinese bird spider).